We begin with the raw amino-acid sequence, 271 residues long: 3-methyl-2-oxobutanoate hydroxymethyltransferase (271 aa).

Mg(2+) is bound by residues D53 and D92. 3-methyl-2-oxobutanoate-binding positions include 53–54, D92, and K120; that span reads DS. E122 contributes to the Mg(2+) binding site. E189 (proton acceptor) is an active-site residue.

It belongs to the PanB family. As to quaternary structure, homodecamer; pentamer of dimers. Mg(2+) serves as cofactor.

It is found in the cytoplasm. The catalysed reaction is 3-methyl-2-oxobutanoate + (6R)-5,10-methylene-5,6,7,8-tetrahydrofolate + H2O = 2-dehydropantoate + (6S)-5,6,7,8-tetrahydrofolate. The protein operates within cofactor biosynthesis; (R)-pantothenate biosynthesis; (R)-pantoate from 3-methyl-2-oxobutanoate: step 1/2. In terms of biological role, catalyzes the reversible reaction in which hydroxymethyl group from 5,10-methylenetetrahydrofolate is transferred onto alpha-ketoisovalerate to form ketopantoate. The chain is 3-methyl-2-oxobutanoate hydroxymethyltransferase from Paraburkholderia phymatum (strain DSM 17167 / CIP 108236 / LMG 21445 / STM815) (Burkholderia phymatum).